We begin with the raw amino-acid sequence, 418 residues long: Serine hydroxymethyltransferase (418 aa).

Residues L121 and 125–127 (GHL) contribute to the (6S)-5,6,7,8-tetrahydrofolate site. Position 230 is an N6-(pyridoxal phosphate)lysine (K230). Position 355–357 (355–357 (SPF)) interacts with (6S)-5,6,7,8-tetrahydrofolate.

It belongs to the SHMT family. As to quaternary structure, homodimer. Pyridoxal 5'-phosphate serves as cofactor.

The protein localises to the cytoplasm. The enzyme catalyses (6R)-5,10-methylene-5,6,7,8-tetrahydrofolate + glycine + H2O = (6S)-5,6,7,8-tetrahydrofolate + L-serine. It participates in one-carbon metabolism; tetrahydrofolate interconversion. It functions in the pathway amino-acid biosynthesis; glycine biosynthesis; glycine from L-serine: step 1/1. Functionally, catalyzes the reversible interconversion of serine and glycine with tetrahydrofolate (THF) serving as the one-carbon carrier. This reaction serves as the major source of one-carbon groups required for the biosynthesis of purines, thymidylate, methionine, and other important biomolecules. Also exhibits THF-independent aldolase activity toward beta-hydroxyamino acids, producing glycine and aldehydes, via a retro-aldol mechanism. This chain is Serine hydroxymethyltransferase, found in Streptococcus pyogenes serotype M5 (strain Manfredo).